The chain runs to 457 residues: Biphenyl dioxygenase subunit alpha (457 aa).

Positions 58-174 (WLMLGHETHI…VETYKGLVFA (117 aa)) constitute a Rieske domain. Residues C100, H102, C120, and H123 each contribute to the [2Fe-2S] cluster site. Fe cation contacts are provided by H233 and H239.

Belongs to the bacterial ring-hydroxylating dioxygenase alpha subunit family. As to quaternary structure, heterohexamer consisting of three BphA subunits and three BphE subunits. A ferredoxin (BphF) and a ferredoxin reductase (BphG) must be present to obtain activity. The cofactor is [2Fe-2S] cluster. Fe cation is required as a cofactor.

The enzyme catalyses biphenyl + NADH + O2 + H(+) = (2R,3S)-3-phenylcyclohexa-3,5-diene-1,2-diol + NAD(+). The protein operates within xenobiotic degradation; biphenyl degradation; 2-hydroxy-2,4-pentadienoate and benzoate from biphenyl: step 1/4. The chain is Biphenyl dioxygenase subunit alpha (bphA) from Comamonas testosteroni (Pseudomonas testosteroni).